The primary structure comprises 282 residues: MSRYQSHSFDDGEINPFANPTSVPAATSKLSPLPPEPYDRGATMDIPLDSGKDLKAKEKELREKEAELKRREQEIKRKEDAIAQAGIVIEEKNWPPFFPLIHHDISNEIPIHLQRIQYVAFTSMLGLVVCLLWNIVAVTTAWIKGEGPTIWFLAIIYFISGVPGAYVMWYRPLYRAMRTDSALKFGWFFFTYLFHIAFCVFAAVAPPIIFKGKSLTGILPAIDVLSGNILVGIFYFIGFGFFCLESLVSIWVIQQVYMYFRGSGKAAEMKQEATRRAMMAAL.

Residues 1–49 are disordered; sequence MSRYQSHSFDDGEINPFANPTSVPAATSKLSPLPPEPYDRGATMDIPLD. Residues 1 to 117 are Cytoplasmic-facing; it reads MSRYQSHSFD…EIPIHLQRIQ (117 aa). The span at 18–30 shows a compositional bias: polar residues; the sequence is ANPTSVPAATSKL. S31 is subject to Phosphoserine. The stretch at 48 to 93 forms a coiled coil; sequence LDSGKDLKAKEKELREKEAELKRREQEIKRKEDAIAQAGIVIEEKN. 4 helical membrane-spanning segments follow: residues 118 to 138, 150 to 170, 185 to 205, and 233 to 253; these read YVAF…IVAV, IWFL…VMWY, FGWF…AAVA, and IFYF…IWVI. Over 254–282 the chain is Cytoplasmic; it reads QQVYMYFRGSGKAAEMKQEATRRAMMAAL.

This sequence belongs to the SCAMP family.

Its subcellular location is the cell membrane. The protein localises to the cytoplasmic vesicle. It is found in the secretory vesicle membrane. Functionally, probably involved in membrane trafficking. The protein is Secretory carrier-associated membrane protein 1 (SCAMP1) of Arabidopsis thaliana (Mouse-ear cress).